A 402-amino-acid chain; its full sequence is Propionate kinase (402 aa).

Residues Asn-11 and Lys-18 each coordinate ATP. Asn-11 serves as a coordination point for Mg(2+). Arg-86 contacts substrate. The active-site Proton donor/acceptor is the Asp-143. ATP is bound by residues His-175, 203-207, 278-280, and 326-330; these read HLGNG, DLR, and GIGEN.

It belongs to the acetokinase family. TdcD subfamily. As to quaternary structure, homodimer. The cofactor is Mg(2+).

The catalysed reaction is propanoate + ATP = propanoyl phosphate + ADP. The protein operates within amino-acid degradation; L-threonine degradation via propanoate pathway; propanoate from L-threonine: step 4/4. Catalyzes the conversion of propionyl phosphate and ADP to propionate and ATP. The protein is Propionate kinase of Enterobacter sp. (strain 638).